The following is a 463-amino-acid chain: Chromosomal replication initiator protein DnaA (463 aa).

Residues 1-83 (MNTNQIILTD…LQLFQHYNNT (83 aa)) are domain I, interacts with DnaA modulators. The interval 83–124 (TIKSIDIITKELPGTTQTVIELPTKTFADIGSSELNSENIFS) is domain II. The interval 125–343 (TLDVRFTFDN…GALNKVIAHS (219 aa)) is domain III, AAA+ region. ATP contacts are provided by Gly-171, Gly-173, Lys-174, and Thr-175. Residues 344-463 (NFTLKEITLE…INLLMKILQH (120 aa)) form a domain IV, binds dsDNA region.

It belongs to the DnaA family. As to quaternary structure, oligomerizes as a right-handed, spiral filament on DNA at oriC.

Its subcellular location is the cytoplasm. Plays an essential role in the initiation and regulation of chromosomal replication. ATP-DnaA binds to the origin of replication (oriC) to initiate formation of the DNA replication initiation complex once per cell cycle. Binds the DnaA box (a 9 base pair repeat at the origin) and separates the double-stranded (ds)DNA. Forms a right-handed helical filament on oriC DNA; dsDNA binds to the exterior of the filament while single-stranded (ss)DNA is stabiized in the filament's interior. The ATP-DnaA-oriC complex binds and stabilizes one strand of the AT-rich DNA unwinding element (DUE), permitting loading of DNA polymerase. After initiation quickly degrades to an ADP-DnaA complex that is not apt for DNA replication. Binds acidic phospholipids. This Rickettsia akari (strain Hartford) protein is Chromosomal replication initiator protein DnaA.